The chain runs to 105 residues: Nucleoid-associated protein cu1912 (105 aa).

Belongs to the YbaB/EbfC family. In terms of assembly, homodimer.

The protein localises to the cytoplasm. It localises to the nucleoid. Binds to DNA and alters its conformation. May be involved in regulation of gene expression, nucleoid organization and DNA protection. The protein is Nucleoid-associated protein cu1912 of Corynebacterium urealyticum (strain ATCC 43042 / DSM 7109).